A 434-amino-acid chain; its full sequence is Mitochondrial distribution and morphology protein 12 (434 aa).

The region spanning 1 to 434 is the SMP-LTD domain; the sequence is MSIDIDWERA…VYPSFWTFLV (434 aa). Acidic residues predominate over residues 70 to 83; the sequence is YEEDDNENFSESSE. Disordered stretches follow at residues 70–141 and 181–277; these read YEED…LRSP and TPLG…LPPR. Over residues 86–97 the composition is skewed to basic and acidic residues; that stretch reads SPTREPVDRYGS. Over residues 215 to 237 the composition is skewed to polar residues; sequence SAQSRPSTANTGNTLLSRGSMSS.

It belongs to the MDM12 family. In terms of assembly, component of the ER-mitochondria encounter structure (ERMES) or MDM complex, composed of MMM1, MDM10, MDM12 and MDM34. An MMM1 homodimer associates with one molecule of MDM12 on each side in a pairwise head-to-tail manner, and the SMP-LTD domains of MMM1 and MDM12 generate a continuous hydrophobic tunnel for phospholipid trafficking.

Its subcellular location is the mitochondrion outer membrane. It is found in the endoplasmic reticulum membrane. In terms of biological role, component of the ERMES/MDM complex, which serves as a molecular tether to connect the endoplasmic reticulum (ER) and mitochondria. Components of this complex are involved in the control of mitochondrial shape and protein biogenesis, and function in nonvesicular lipid trafficking between the ER and mitochondria. MDM12 is required for the interaction of the ER-resident membrane protein MMM1 and the outer mitochondrial membrane-resident beta-barrel protein MDM10. The MDM12-MMM1 subcomplex functions in the major beta-barrel assembly pathway that is responsible for biogenesis of all mitochondrial outer membrane beta-barrel proteins, and acts in a late step after the SAM complex. The MDM10-MDM12-MMM1 subcomplex further acts in the TOM40-specific pathway after the action of the MDM12-MMM1 complex. Essential for establishing and maintaining the structure of mitochondria and maintenance of mtDNA nucleoids. This chain is Mitochondrial distribution and morphology protein 12, found in Ajellomyces dermatitidis (strain ER-3 / ATCC MYA-2586) (Blastomyces dermatitidis).